The primary structure comprises 382 residues: uncharacterized protein (382 aa).

A signal peptide spans 1–25 (MKKWMAAVFVMMLMLCFGGIENVKA). Catalysis depends on Ser-186, which acts as the Nucleophile. Residues Asp-354 and His-357 contribute to the active site.

It belongs to the 'GDSL' lipolytic enzyme family.

This is an uncharacterized protein from Bacillus subtilis (strain 168).